We begin with the raw amino-acid sequence, 438 residues long: tRNA wybutosine-synthesizing protein 2 homolog (438 aa).

S-adenosyl-L-methionine-binding positions include serine 209, lysine 216, glutamate 256, and 284-285 (DN).

Belongs to the class I-like SAM-binding methyltransferase superfamily. TRM5/TYW2 family.

The enzyme catalyses 4-demethylwyosine(37) in tRNA(Phe) + S-adenosyl-L-methionine = 4-demethyl-7-[(3S)-3-amino-3-carboxypropyl]wyosine(37) in tRNA(Phe) + S-methyl-5'-thioadenosine + H(+). It participates in tRNA modification; wybutosine-tRNA(Phe) biosynthesis. Its function is as follows. S-adenosyl-L-methionine-dependent transferase that acts as a component of the wybutosine biosynthesis pathway. Wybutosine is a hyper modified guanosine with a tricyclic base found at the 3'-position adjacent to the anticodon of eukaryotic phenylalanine tRNA. Catalyzes the transfer of the alpha-amino-alpha-carboxypropyl (acp) group from S-adenosyl-L-methionine to the C-7 position of 4-demethylwyosine (imG-14) to produce wybutosine-86. This is tRNA wybutosine-synthesizing protein 2 homolog (TRMT12) from Bos taurus (Bovine).